The chain runs to 465 residues: Putative multidrug resistance protein MdtD (465 aa).

Helical transmembrane passes span 12–32 (LWIVAFGFFMQTLDTTIVNTA), 49–69 (SVIVSYVLTVAVMLPASGWLA), 72–92 (IGVKWVFFSAIILFTFGSLMC), 102–124 (ILSRVLQGVGGAMMVPVGRLTVM), 138–158 (FVTLPGQIGPLVGPALGGFLV), 165–185 (WIFLINLPVGVIGALATLLLM), 195–215 (FDISGFIMLAIGMATLTLALD), 219–239 (GLGLSPLAIAGLILCGVIALG), 267–287 (LVGSMSARIGSGMLPFMTPIF), 290–310 (IGLGFSPFHAGLMMIPMIIGS), 342–362 (LSLPLVAIMGWTLLMPVVLFF), 393–413 (LLSMAMQLSMSIGVSTAGILL), and 430–450 (SAFLYSYLCMAIIIALPALIF).

It belongs to the major facilitator superfamily. TCR/Tet family.

It localises to the cell inner membrane. This is Putative multidrug resistance protein MdtD from Yersinia pseudotuberculosis serotype O:1b (strain IP 31758).